The primary structure comprises 594 residues: Protein CBFA2T2 (594 aa).

Position 24 is a phosphoserine (Ser24). Lys29 is covalently cross-linked (Glycyl lysine isopeptide (Lys-Gly) (interchain with G-Cter in SUMO2)). The segment at 48–96 (GGPRPVSFTPTALSNGINHSPPTLNGAPSPPQRFSNGPASSTSSALTNQ) is disordered. Polar residues-rich tracts occupy residues 55–70 (FTPTALSNGINHSPPT) and 79–96 (QRFSNGPASSTSSALTNQ). The interval 98-206 (LPATCGARQL…QHEHLLLNTS (109 aa)) is interaction with PRDM14. The region spanning 104–199 (ARQLSKLKRF…TPSQYLAQHE (96 aa)) is the TAFH domain. The disordered stretch occupies residues 220 to 257 (VHGNGKRPSPERRDENNFERDTVPPEPPAKRVCTISPA). Residues 227-242 (PSPERRDENNFERDTV) are compositionally biased toward basic and acidic residues. Ser255 bears the Phosphoserine mark. The tract at residues 322 to 368 (QDELVDHRLTEREWADEWKHLDHALNCIMEMVEKTRRSMAVLRRCQE) is nervy homology region 2 (NHR2). Positions 388–416 (RKTGTELVSRQHSPGSTDSLSNDSQREFT) are disordered. The segment covering 393-410 (ELVSRQHSPGSTDSLSND) has biased composition (polar residues). Ser400 carries the phosphoserine modification. The nervy homology region 3 (NHR3) stretch occupies residues 426–475 (VEFWKKTEEAVNKVKIQAMSEVQKAVAEAEQKAFEVIATERARMEQTIAD). Lys440 is covalently cross-linked (Glycyl lysine isopeptide (Lys-Gly) (interchain with G-Cter in SUMO2)). Positions 442-482 (QAMSEVQKAVAEAEQKAFEVIATERARMEQTIADVKRQAAE) form a coiled coil. Cys498, Cys501, Cys509, Cys512, Cys518, Cys522, His530, and Cys534 together coordinate Zn(2+). Residues 498–534 (CWNCGRKASETCSGCNIARYCGSFCQHKDWERHHRLC) form an MYND-type zinc finger. A disordered region spans residues 538-594 (LHGHSPHSQSRPLLPGGRGSARSADCSVPSPALDKTSATTSRSSTPASVTAIDANGL). Ser567 is modified (phosphoserine). Over residues 573–588 (TSATTSRSSTPASVTA) the composition is skewed to low complexity.

Belongs to the CBFA2T family. In terms of assembly, homooligomer. Homotetramerization is mediated by the NHR2 domain. Interacts with CBFA2T3/MTG16. Can interact with RUNX1T1/CBFA2T1. Heterotetramerization between members of the CBFA2T family is proposed. Interacts with RBP, GFI1, TCF4, PRDM14. Interacts with TAL1 and CBFA2T3/MTG16; the heteromer with CBFA2T3/MTG16 may function in repression of TAL1. Expressed in embryonic stem cells.

The protein resides in the nucleus. Its function is as follows. Transcriptional corepressor which facilitates transcriptional repression via its association with DNA-binding transcription factors and recruitment of other corepressors and histone-modifying enzymes. Via association with PRDM14 is involved in regulation of embryonic stem cell (ESC) pluripotency. Involved in primordial germ cell (PCG) formation. Stabilizes PRDM14 and OCT4 on chromatin in a homooligomerization-dependent mannerCan repress the expression of MMP7 in a ZBTB33-dependent manner. Through heteromerization with CBFA2T3/MTG16 may be involved in regulation of the proliferation and the differentiation of erythroid progenitors by repressing the expression of TAL1 target genes. Required for the maintenance of the secretory cell lineage in the small intestine. Can inhibit Notch signaling probably by association with RBPJ and may be involved in GFI1-mediated Paneth cell differentiation. This Mus musculus (Mouse) protein is Protein CBFA2T2 (Cbfa2t2).